The primary structure comprises 178 residues: Adenine phosphoribosyltransferase (178 aa).

It belongs to the purine/pyrimidine phosphoribosyltransferase family. As to quaternary structure, homodimer.

It is found in the cytoplasm. It catalyses the reaction AMP + diphosphate = 5-phospho-alpha-D-ribose 1-diphosphate + adenine. The protein operates within purine metabolism; AMP biosynthesis via salvage pathway; AMP from adenine: step 1/1. Functionally, catalyzes a salvage reaction resulting in the formation of AMP, that is energically less costly than de novo synthesis. This chain is Adenine phosphoribosyltransferase, found in Pseudoalteromonas atlantica (strain T6c / ATCC BAA-1087).